We begin with the raw amino-acid sequence, 558 residues long: Dihydroxy-acid dehydratase (558 aa).

A Mg(2+)-binding site is contributed by Asp-78. Cys-119 is a [2Fe-2S] cluster binding site. Asp-120 and Lys-121 together coordinate Mg(2+). Lys-121 carries the post-translational modification N6-carboxylysine. Cys-192 serves as a coordination point for [2Fe-2S] cluster. Glu-446 contacts Mg(2+). The active-site Proton acceptor is Ser-472.

The protein belongs to the IlvD/Edd family. In terms of assembly, homodimer. It depends on [2Fe-2S] cluster as a cofactor. Requires Mg(2+) as cofactor.

The catalysed reaction is (2R)-2,3-dihydroxy-3-methylbutanoate = 3-methyl-2-oxobutanoate + H2O. It catalyses the reaction (2R,3R)-2,3-dihydroxy-3-methylpentanoate = (S)-3-methyl-2-oxopentanoate + H2O. It functions in the pathway amino-acid biosynthesis; L-isoleucine biosynthesis; L-isoleucine from 2-oxobutanoate: step 3/4. It participates in amino-acid biosynthesis; L-valine biosynthesis; L-valine from pyruvate: step 3/4. Its function is as follows. Functions in the biosynthesis of branched-chain amino acids. Catalyzes the dehydration of (2R,3R)-2,3-dihydroxy-3-methylpentanoate (2,3-dihydroxy-3-methylvalerate) into 2-oxo-3-methylpentanoate (2-oxo-3-methylvalerate) and of (2R)-2,3-dihydroxy-3-methylbutanoate (2,3-dihydroxyisovalerate) into 2-oxo-3-methylbutanoate (2-oxoisovalerate), the penultimate precursor to L-isoleucine and L-valine, respectively. This chain is Dihydroxy-acid dehydratase, found in Campylobacter jejuni subsp. jejuni serotype O:2 (strain ATCC 700819 / NCTC 11168).